Here is a 247-residue protein sequence, read N- to C-terminus: ATP synthase subunit a, chloroplastic (247 aa).

Transmembrane regions (helical) follow at residues 38-58 (QVLITSWVVIAILLGSATIAV), 95-115 (VPFIGTMFLFIFVSNWSGALL), 134-154 (INTTVALALLTSVAYFYAGLT), 199-219 (LVVVVLVSLVPSVVPIPVMFL), and 220-240 (GLFTSGIQALIFATLAAAYIG).

Belongs to the ATPase A chain family. In terms of assembly, F-type ATPases have 2 components, CF(1) - the catalytic core - and CF(0) - the membrane proton channel. CF(1) has five subunits: alpha(3), beta(3), gamma(1), delta(1), epsilon(1). CF(0) has four main subunits: a, b, b' and c.

Its subcellular location is the plastid. The protein localises to the chloroplast thylakoid membrane. Key component of the proton channel; it plays a direct role in the translocation of protons across the membrane. The polypeptide is ATP synthase subunit a, chloroplastic (Panax ginseng (Korean ginseng)).